A 511-amino-acid chain; its full sequence is Transcription factor bHLH28 (511 aa).

The bHLH domain maps to aspartate 339–leucine 388.

In terms of assembly, homodimer.

It localises to the nucleus. This is Transcription factor bHLH28 (BHLH28) from Arabidopsis thaliana (Mouse-ear cress).